A 134-amino-acid chain; its full sequence is Mediator of RNA polymerase II transcription subunit 10 (134 aa).

This sequence belongs to the Mediator complex subunit 10 family. Component of the Mediator complex.

The protein localises to the nucleus. Its function is as follows. Component of the Mediator complex, a coactivator involved in the regulated transcription of nearly all RNA polymerase II-dependent genes. Mediator functions as a bridge to convey information from gene-specific regulatory proteins to the basal RNA polymerase II transcription machinery. Mediator is recruited to promoters by direct interactions with regulatory proteins and serves as a scaffold for the assembly of a functional preinitiation complex with RNA polymerase II and the general transcription factors. Negatively regulates the Wnt signaling pathway and positively regulates the Nodal signaling pathway. Required for cardiac cushion formation. This chain is Mediator of RNA polymerase II transcription subunit 10 (med10), found in Danio rerio (Zebrafish).